A 328-amino-acid chain; its full sequence is MPLHNLTRFPRLEFIGAPTPLEYLPRFSDYLGREIFIKRDEVTPMAMGGNKLRKLEFLAADALREGADTLITAGAIQSNHVRQTAAVAAKLGLHCVALLENPIGTTAENYLTNGNRLLLDLFNTQIEMCDALTDPNAQLEELATRVEAQGFRPYVIPVGGSNALGALGYVESALEIAQQCEGAVNISSVVVASGSAGTHAGLAVGLEHLMPESELIGVTVSRSVADQLPKVVNLQQAIAKELELTASAEILLWDDYFAPGYGVPNDEGMEAVKLLARLEGILLDPVYTGKAMAGLIDGISQKRFKDEGPILFIHTGGAPALFAYHPHV.

Position 51 is an N6-(pyridoxal phosphate)lysine (K51).

This sequence belongs to the ACC deaminase/D-cysteine desulfhydrase family. As to quaternary structure, homodimer. It depends on pyridoxal 5'-phosphate as a cofactor.

It carries out the reaction D-cysteine + H2O = hydrogen sulfide + pyruvate + NH4(+) + H(+). In terms of biological role, catalyzes the alpha,beta-elimination reaction of D-cysteine and of several D-cysteine derivatives. It could be a defense mechanism against D-cysteine. This is D-cysteine desulfhydrase from Shigella flexneri serotype 5b (strain 8401).